The primary structure comprises 209 residues: MASPAPLVASISHQMVALQTLQLLQQEWGWGDGPSAPGSPRGPDHVPIAQARRPGQLRTRRGLGRGSIGARGSPEAGGLRGAEGGAELLPFPRDRGPCTLARMAMRSALARVVDSTSELVSVEQTLLGPLQQERPFPVHLKDSVEFRNICSHLALQIEGQQFDRDLNAAHQCLKTIVKKLIQSLANLPSDAHVVACASLRQILQNLPDV.

A disordered region spans residues 28-87 (WGWGDGPSAPGSPRGPDHVPIAQARRPGQLRTRRGLGRGSIGARGSPEAGGLRGAEGGAE).

This Mus musculus (Mouse) protein is Leukemia-associated protein 7 homolog (Dleu7).